The following is a 166-amino-acid chain: NAD(P)H-quinone oxidoreductase subunit I, chloroplastic (166 aa).

4Fe-4S ferredoxin-type domains are found at residues 55 to 84 and 95 to 124; these read GRIHFEFDKCIACEVCVRVCPIDLPVVDWK and LNYSIDFGICIFCGNCVEYCPTNCLSMTEE. [4Fe-4S] cluster-binding residues include Cys-64, Cys-67, Cys-70, Cys-74, Cys-104, Cys-107, Cys-110, and Cys-114.

It belongs to the complex I 23 kDa subunit family. In terms of assembly, NDH is composed of at least 16 different subunits, 5 of which are encoded in the nucleus. [4Fe-4S] cluster serves as cofactor.

It localises to the plastid. The protein localises to the chloroplast thylakoid membrane. The catalysed reaction is a plastoquinone + NADH + (n+1) H(+)(in) = a plastoquinol + NAD(+) + n H(+)(out). It catalyses the reaction a plastoquinone + NADPH + (n+1) H(+)(in) = a plastoquinol + NADP(+) + n H(+)(out). In terms of biological role, NDH shuttles electrons from NAD(P)H:plastoquinone, via FMN and iron-sulfur (Fe-S) centers, to quinones in the photosynthetic chain and possibly in a chloroplast respiratory chain. The immediate electron acceptor for the enzyme in this species is believed to be plastoquinone. Couples the redox reaction to proton translocation, and thus conserves the redox energy in a proton gradient. The chain is NAD(P)H-quinone oxidoreductase subunit I, chloroplastic from Ambrosia trifida (Giant ragweed).